The chain runs to 284 residues: L-ribulose-5-phosphate 3-epimerase UlaE (284 aa).

It belongs to the L-ribulose-5-phosphate 3-epimerase family.

It catalyses the reaction L-ribulose 5-phosphate = L-xylulose 5-phosphate. It functions in the pathway cofactor degradation; L-ascorbate degradation; D-xylulose 5-phosphate from L-ascorbate: step 3/4. Its function is as follows. Catalyzes the isomerization of L-xylulose-5-phosphate to L-ribulose-5-phosphate. Is involved in the anaerobic L-ascorbate utilization. In Escherichia coli (strain K12 / MC4100 / BW2952), this protein is L-ribulose-5-phosphate 3-epimerase UlaE.